Here is a 258-residue protein sequence, read N- to C-terminus: Imidazole glycerol phosphate synthase subunit HisF (258 aa).

Catalysis depends on residues Asp-11 and Asp-130.

This sequence belongs to the HisA/HisF family. As to quaternary structure, heterodimer of HisH and HisF.

The protein localises to the cytoplasm. It catalyses the reaction 5-[(5-phospho-1-deoxy-D-ribulos-1-ylimino)methylamino]-1-(5-phospho-beta-D-ribosyl)imidazole-4-carboxamide + L-glutamine = D-erythro-1-(imidazol-4-yl)glycerol 3-phosphate + 5-amino-1-(5-phospho-beta-D-ribosyl)imidazole-4-carboxamide + L-glutamate + H(+). The protein operates within amino-acid biosynthesis; L-histidine biosynthesis; L-histidine from 5-phospho-alpha-D-ribose 1-diphosphate: step 5/9. IGPS catalyzes the conversion of PRFAR and glutamine to IGP, AICAR and glutamate. The HisF subunit catalyzes the cyclization activity that produces IGP and AICAR from PRFAR using the ammonia provided by the HisH subunit. This Blochmanniella pennsylvanica (strain BPEN) protein is Imidazole glycerol phosphate synthase subunit HisF.